The sequence spans 127 residues: Insulin-like growth factor 3.L (127 aa).

Positions M1 to A49 are cleaved as a signal peptide. Residues A49 to V80 form a b region. Disulfide bonds link C61/C99, C73/C112, and C98/C103. Residues S81–P92 form a c region. The tract at residues G93 to A113 is a. The tract at residues A114–G121 is d. Positions R122–S127 are cleaved as a propeptide — e peptide.

The protein belongs to the insulin family.

Its subcellular location is the secreted. Functionally, the insulin-like growth factors, isolated from plasma, are structurally and functionally related to insulin but have a much higher growth-promoting activity. Promotes anterior neural development. This chain is Insulin-like growth factor 3.L, found in Xenopus laevis (African clawed frog).